The primary structure comprises 440 residues: Xaa-Pro dipeptidase (440 aa).

Mn(2+) contacts are provided by Asp244, Asp255, His335, Glu380, and Glu419.

Belongs to the peptidase M24B family. Bacterial-type prolidase subfamily. It depends on Mn(2+) as a cofactor.

It carries out the reaction Xaa-L-Pro dipeptide + H2O = an L-alpha-amino acid + L-proline. Splits dipeptides with a prolyl residue in the C-terminal position. This Shewanella baltica (strain OS223) protein is Xaa-Pro dipeptidase.